A 468-amino-acid polypeptide reads, in one-letter code: Glutamate--tRNA ligase (468 aa).

L-glutamate is bound at residue 5–7 (RIA). The 'HIGH' region motif lies at 8 to 18 (PSPTGDPHVGT). Residue His-15 participates in ATP binding. L-glutamate is bound by residues Glu-41, 187 to 191 (YHLAN), and Arg-205. Residues Glu-208, Leu-236, 243–247 (KISKR), and Lys-246 each bind ATP. Residues 243-247 (KISKR) carry the 'KMSKS' region motif. Residues 432–447 (QPLRAALTGSLETPGL) form an interaction with tRNA region.

It belongs to the class-I aminoacyl-tRNA synthetase family. Glutamate--tRNA ligase type 1 subfamily. Monomer.

It localises to the cytoplasm. The catalysed reaction is tRNA(Glu) + L-glutamate + ATP = L-glutamyl-tRNA(Glu) + AMP + diphosphate. In the absence of bound tRNA, ATP is bound in a non-productive mode, and the enzyme cannot activate amino acids. Catalyzes the attachment of glutamate to tRNA(Glu) in a two-step reaction: glutamate is first activated by ATP to form Glu-AMP and then transferred to the acceptor end of tRNA(Glu). The chain is Glutamate--tRNA ligase from Thermus thermophilus (strain ATCC 27634 / DSM 579 / HB8).